Here is a 555-residue protein sequence, read N- to C-terminus: 2-succinyl-5-enolpyruvyl-6-hydroxy-3-cyclohexene-1-carboxylate synthase (555 aa).

This sequence belongs to the TPP enzyme family. MenD subfamily. In terms of assembly, homodimer. It depends on Mg(2+) as a cofactor. The cofactor is Mn(2+). Requires thiamine diphosphate as cofactor.

The enzyme catalyses isochorismate + 2-oxoglutarate + H(+) = 5-enolpyruvoyl-6-hydroxy-2-succinyl-cyclohex-3-ene-1-carboxylate + CO2. Its pathway is quinol/quinone metabolism; 1,4-dihydroxy-2-naphthoate biosynthesis; 1,4-dihydroxy-2-naphthoate from chorismate: step 2/7. The protein operates within quinol/quinone metabolism; menaquinone biosynthesis. Functionally, catalyzes the thiamine diphosphate-dependent decarboxylation of 2-oxoglutarate and the subsequent addition of the resulting succinic semialdehyde-thiamine pyrophosphate anion to isochorismate to yield 2-succinyl-5-enolpyruvyl-6-hydroxy-3-cyclohexene-1-carboxylate (SEPHCHC). This Bacteroides fragilis (strain ATCC 25285 / DSM 2151 / CCUG 4856 / JCM 11019 / LMG 10263 / NCTC 9343 / Onslow / VPI 2553 / EN-2) protein is 2-succinyl-5-enolpyruvyl-6-hydroxy-3-cyclohexene-1-carboxylate synthase.